Consider the following 494-residue polypeptide: Zinc metalloproteinase/disintegrin (494 aa).

A signal peptide spans 1–20; the sequence is MIQVLLVTICLAVFPFQGSS. Positions 21–193 are excised as a propeptide; that stretch reads KTLKSGNVND…KKASHLVATS (173 aa). One can recognise a Peptidase M12B domain in the interval 201 to 396; the sequence is RYVQLVIVAD…HNPPCILNQA (196 aa). Disulfide bonds link Cys-311–Cys-391, Cys-351–Cys-375, and Cys-353–Cys-358. Zn(2+) is bound at residue His-336. The active site involves Glu-337. His-340 and His-346 together coordinate Zn(2+). A propeptide spanning residues 410–431 is cleaved from the precursor; it reads ELLQNSVNPCYDPVTCQPKEKE. One can recognise a Disintegrin domain in the interval 417-478; the sequence is NPCYDPVTCQ…DCPRNPYKGE (62 aa). Cystine bridges form between Cys-433–Cys-442, Cys-438–Cys-463, Cys-439–Cys-468, and Cys-451–Cys-470. The short motif at 455–457 is the Cell attachment site element; sequence RGD. Residues 482 to 494 constitute a propeptide that is removed on maturation; it reads MEWPAPAKGSVLM.

The protein belongs to the venom metalloproteinase (M12B) family. P-II subfamily. P-IIa sub-subfamily. As to quaternary structure, monomer (disintegrin). In terms of tissue distribution, expressed by the venom gland.

It localises to the secreted. In terms of biological role, impairs hemostasis in the envenomed animal. Functionally, inhibits ADP-induced platelet aggregation (IC(50)=168 nM). Inhibits alpha-5/beta-1 (ITGA5/ITGB1) integrin and induces the expression of a ligand-induced binding site epitope on beta-1 integrin subunit. Has a direct chemotactic stimulus on human neutrophils in vitro. The polypeptide is Zinc metalloproteinase/disintegrin (Echis ocellatus (Ocellated saw-scaled viper)).